The sequence spans 50 residues: Large ribosomal subunit protein bL33A (50 aa).

The protein belongs to the bacterial ribosomal protein bL33 family.

The protein is Large ribosomal subunit protein bL33A (rpmG1) of Mycoplasmopsis pulmonis (strain UAB CTIP) (Mycoplasma pulmonis).